The following is a 548-amino-acid chain: Synaptic vesicle 2-related protein (548 aa).

The Cytoplasmic segment spans residues 1 to 87 (MEEDLFQLRQ…GFGKFQWKLS (87 aa)). A phosphoserine mark is found at Ser25 and Ser31. The chain crosses the membrane as a helical span at residues 88–108 (VLTGLAWMADAMEMMILSILA). At 109-122 (PQLHCEWRLPSWQV) the chain is on the vesicular side. A helical transmembrane segment spans residues 123 to 143 (ALLTSVVFVGMMSSSTLWGNI). The Cytoplasmic segment spans residues 144–156 (SDQYGRKTGLKIS). A helical membrane pass occupies residues 157-177 (VLWTLYYGILSAFAPVYSWIL). The Vesicular segment spans residues 178 to 180 (VLR). Residues 181–201 (GLVGFGIGGVPQSVTLYAEFL) form a helical membrane-spanning segment. The Cytoplasmic segment spans residues 202-209 (PMKARAKC). Residues 210 to 230 (ILLIEVFWAIGTVFEVVLAVF) form a helical membrane-spanning segment. Topologically, residues 231-238 (VMPSLGWR) are vesicular. The helical transmembrane segment at 239-259 (WLLILSAVPLLLFAVLCFWLP) threads the bilayer. At 260-316 (ESARYDVLSGNQEKAIATLKRIATENGAPMPLGKLIISRQEDRGKMRDLFTPHFRWT) the chain is on the cytoplasmic side. Residues 317–337 (TLLLWFIWFSNAFSYYGLVLL) form a helical membrane-spanning segment. At 338–373 (TTELFQAGDVCSISSRKKAVEAKCSLACEYLSEEDY) the chain is on the vesicular side. Residues 374–394 (MDLLWTTLSEFPGVLVTLWII) traverse the membrane as a helical segment. Residues 395–401 (DRLGRKK) lie on the Cytoplasmic side of the membrane. Residues 402-422 (TMALCFVVFSFCSLLLFICVG) form a helical membrane-spanning segment. The Vesicular portion of the chain corresponds to 423-425 (RNM). A helical transmembrane segment spans residues 426 to 446 (LTLLLFIARAFISGGFQAAYV). The Cytoplasmic segment spans residues 447 to 457 (YTPEVYPTATR). The chain crosses the membrane as a helical span at residues 458 to 478 (ALGLGTCSGMARVGALITPFI). Topologically, residues 479–489 (AQVMLESSVYL) are vesicular. The helical transmembrane segment at 490 to 510 (TLAVYSGCCLLAALASCFLPI) threads the bilayer. Topologically, residues 511–548 (ETKGRGLQESSHREWGQEMVGRGAHGTGVARSNSGSQE) are cytoplasmic. A disordered region spans residues 528–548 (EMVGRGAHGTGVARSNSGSQE). Position 542 is a phosphoserine (Ser542).

This sequence belongs to the major facilitator superfamily. Detected in brain and adrenal medulla.

The protein localises to the cytoplasmic vesicle. Its subcellular location is the secretory vesicle. The protein resides in the synaptic vesicle membrane. This Bos taurus (Bovine) protein is Synaptic vesicle 2-related protein (SVOP).